Reading from the N-terminus, the 336-residue chain is DNA-directed RNA polymerase subunit alpha (336 aa).

An alpha N-terminal domain (alpha-NTD) region spans residues 1-235 (MIEFVIPKKL…HFKIVTEGLP (235 aa)). Residues 264–336 (RENSDVYNRK…KFGLELRKGE (73 aa)) are alpha C-terminal domain (alpha-CTD).

The protein belongs to the RNA polymerase alpha chain family. As to quaternary structure, homodimer. The RNAP catalytic core consists of 2 alpha, 1 beta, 1 beta' and 1 omega subunit. When a sigma factor is associated with the core the holoenzyme is formed, which can initiate transcription.

The enzyme catalyses RNA(n) + a ribonucleoside 5'-triphosphate = RNA(n+1) + diphosphate. Functionally, DNA-dependent RNA polymerase catalyzes the transcription of DNA into RNA using the four ribonucleoside triphosphates as substrates. The protein is DNA-directed RNA polymerase subunit alpha of Thermotoga maritima (strain ATCC 43589 / DSM 3109 / JCM 10099 / NBRC 100826 / MSB8).